The chain runs to 131 residues: UPF0102 protein YraN (131 aa).

A compositionally biased stretch (polar residues) spans 1-19 (MATVPTRSGSPRQLTTKQT). The tract at residues 1-21 (MATVPTRSGSPRQLTTKQTGD) is disordered.

Belongs to the UPF0102 family.

The chain is UPF0102 protein YraN from Escherichia coli O7:K1 (strain IAI39 / ExPEC).